A 198-amino-acid polypeptide reads, in one-letter code: Ribosomal RNA small subunit methyltransferase G (198 aa).

Residues Gly-74, Phe-79, 123 to 124 (IQ), and Arg-136 each bind S-adenosyl-L-methionine.

Belongs to the methyltransferase superfamily. RNA methyltransferase RsmG family.

It is found in the cytoplasm. The catalysed reaction is guanosine(527) in 16S rRNA + S-adenosyl-L-methionine = N(7)-methylguanosine(527) in 16S rRNA + S-adenosyl-L-homocysteine. Its function is as follows. Specifically methylates the N7 position of guanine in position 527 of 16S rRNA. The sequence is that of Ribosomal RNA small subunit methyltransferase G from Orientia tsutsugamushi (strain Boryong) (Rickettsia tsutsugamushi).